Consider the following 270-residue polypeptide: NAD kinase (270 aa).

Asp-63 serves as the catalytic Proton acceptor. Residues 63 to 64 (DG), Arg-68, 131 to 132 (NE), Lys-142, Arg-159, Asp-161, 172 to 177 (TAYAMS), Ala-196, and Gln-230 each bind NAD(+).

Belongs to the NAD kinase family. Requires a divalent metal cation as cofactor.

The protein localises to the cytoplasm. It carries out the reaction NAD(+) + ATP = ADP + NADP(+) + H(+). Its function is as follows. Involved in the regulation of the intracellular balance of NAD and NADP, and is a key enzyme in the biosynthesis of NADP. Catalyzes specifically the phosphorylation on 2'-hydroxyl of the adenosine moiety of NAD to yield NADP. This chain is NAD kinase, found in Methanoregula boonei (strain DSM 21154 / JCM 14090 / 6A8).